A 186-amino-acid chain; its full sequence is Ribosome-recycling factor (186 aa).

It belongs to the RRF family.

The protein resides in the cytoplasm. Responsible for the release of ribosomes from messenger RNA at the termination of protein biosynthesis. May increase the efficiency of translation by recycling ribosomes from one round of translation to another. This Bordetella parapertussis (strain 12822 / ATCC BAA-587 / NCTC 13253) protein is Ribosome-recycling factor.